The sequence spans 1368 residues: DNA-directed RNA polymerase subunit beta (1368 aa).

The protein belongs to the RNA polymerase beta chain family. The RNAP catalytic core consists of 2 alpha, 1 beta, 1 beta' and 1 omega subunit. When a sigma factor is associated with the core the holoenzyme is formed, which can initiate transcription.

It carries out the reaction RNA(n) + a ribonucleoside 5'-triphosphate = RNA(n+1) + diphosphate. DNA-dependent RNA polymerase catalyzes the transcription of DNA into RNA using the four ribonucleoside triphosphates as substrates. This Cupriavidus metallidurans (strain ATCC 43123 / DSM 2839 / NBRC 102507 / CH34) (Ralstonia metallidurans) protein is DNA-directed RNA polymerase subunit beta.